The following is a 478-amino-acid chain: Probable serine carboxypeptidase CPVL (478 aa).

Residues Met-1–Gly-22 form the signal peptide. Residues Asn-83 and Asn-134 are each glycosylated (N-linked (GlcNAc...) asparagine). Ser-206 is an active-site residue. Asn-309 and Asn-350 each carry an N-linked (GlcNAc...) asparagine glycan. Residues Asp-390 and His-450 contribute to the active site.

Belongs to the peptidase S10 family.

In terms of biological role, may be involved in the digestion of phagocytosed particles in the lysosome, participation in an inflammatory protease cascade, and trimming of peptides for antigen presentation. This Mus musculus (Mouse) protein is Probable serine carboxypeptidase CPVL (Cpvl).